The primary structure comprises 876 residues: Phosphoenolpyruvate carboxylase (876 aa).

Active-site residues include His138 and Lys543.

The protein belongs to the PEPCase type 1 family. The cofactor is Mg(2+).

The enzyme catalyses oxaloacetate + phosphate = phosphoenolpyruvate + hydrogencarbonate. Its function is as follows. Forms oxaloacetate, a four-carbon dicarboxylic acid source for the tricarboxylic acid cycle. The chain is Phosphoenolpyruvate carboxylase from Vibrio atlanticus (strain LGP32) (Vibrio splendidus (strain Mel32)).